A 319-amino-acid polypeptide reads, in one-letter code: Acetyl-coenzyme A carboxylase carboxyl transferase subunit alpha (319 aa).

The 262-residue stretch at 35 to 296 (NIDEEVHRLR…KAQLLADLAD (262 aa)) folds into the CoA carboxyltransferase C-terminal domain.

It belongs to the AccA family. As to quaternary structure, acetyl-CoA carboxylase is a heterohexamer composed of biotin carboxyl carrier protein (AccB), biotin carboxylase (AccC) and two subunits each of ACCase subunit alpha (AccA) and ACCase subunit beta (AccD).

It is found in the cytoplasm. It carries out the reaction N(6)-carboxybiotinyl-L-lysyl-[protein] + acetyl-CoA = N(6)-biotinyl-L-lysyl-[protein] + malonyl-CoA. It functions in the pathway lipid metabolism; malonyl-CoA biosynthesis; malonyl-CoA from acetyl-CoA: step 1/1. Component of the acetyl coenzyme A carboxylase (ACC) complex. First, biotin carboxylase catalyzes the carboxylation of biotin on its carrier protein (BCCP) and then the CO(2) group is transferred by the carboxyltransferase to acetyl-CoA to form malonyl-CoA. The polypeptide is Acetyl-coenzyme A carboxylase carboxyl transferase subunit alpha (Citrobacter koseri (strain ATCC BAA-895 / CDC 4225-83 / SGSC4696)).